The chain runs to 115 residues: UPF0738 protein SAV1005 (115 aa).

It belongs to the UPF0738 family.

In Staphylococcus aureus (strain Mu50 / ATCC 700699), this protein is UPF0738 protein SAV1005.